We begin with the raw amino-acid sequence, 427 residues long: Serine hydroxymethyltransferase (427 aa).

(6S)-5,6,7,8-tetrahydrofolate-binding positions include Leu122 and 126-128 (GHL). Lys231 carries the N6-(pyridoxal phosphate)lysine modification. Residues Glu247 and 355–357 (SPF) contribute to the (6S)-5,6,7,8-tetrahydrofolate site.

The protein belongs to the SHMT family. As to quaternary structure, homodimer. The cofactor is pyridoxal 5'-phosphate.

Its subcellular location is the cytoplasm. It catalyses the reaction (6R)-5,10-methylene-5,6,7,8-tetrahydrofolate + glycine + H2O = (6S)-5,6,7,8-tetrahydrofolate + L-serine. It participates in one-carbon metabolism; tetrahydrofolate interconversion. Its pathway is amino-acid biosynthesis; glycine biosynthesis; glycine from L-serine: step 1/1. Functionally, catalyzes the reversible interconversion of serine and glycine with tetrahydrofolate (THF) serving as the one-carbon carrier. This reaction serves as the major source of one-carbon groups required for the biosynthesis of purines, thymidylate, methionine, and other important biomolecules. Also exhibits THF-independent aldolase activity toward beta-hydroxyamino acids, producing glycine and aldehydes, via a retro-aldol mechanism. The polypeptide is Serine hydroxymethyltransferase (Microcystis aeruginosa (strain NIES-843 / IAM M-2473)).